Here is a 185-residue protein sequence, read N- to C-terminus: Peptidoglycan-recognition protein SC1a (185 aa).

Residues 1 to 21 form the signal peptide; the sequence is MVSKVALLLAVLVCSQYMAQG. The N-acetylmuramoyl-L-alanine amidase domain maps to 46–170; that stretch reads SYAIIHHTAG…RQVSATECPG (125 aa). His51 provides a ligand contact to Zn(2+). An intrachain disulfide couples Cys58 to Cys64. Zn(2+) is bound by residues His160 and Cys168.

It belongs to the N-acetylmuramoyl-L-alanine amidase 2 family. Zn(2+) is required as a cofactor.

The protein localises to the secreted. The catalysed reaction is Hydrolyzes the link between N-acetylmuramoyl residues and L-amino acid residues in certain cell-wall glycopeptides.. In terms of biological role, N-acetylmuramyl-L-alanine amidase involved in innate immunity by degrading bacterial peptidoglycans (PGN). Plays a scavenger role by digesting biologically active PGN into biologically inactive fragments. Has no direct bacteriolytic activity. This is Peptidoglycan-recognition protein SC1a from Drosophila melanogaster (Fruit fly).